The following is a 338-amino-acid chain: MKRMIALDGAQGEGGGQILRSALSLPMITGQPFTITGIRAGRAKPGLLRQHLTAVKAAAEICRATVEGAELGSQRLVFRPGTVRGGDYRFAIGSAGSCTLVLQTVLPALWFADGPSRVEVSGGTDNPSAPPADFIRRVLEPLLARIGVHQQTTLLRHGFYPAGGGVVATEVSPVASFNSLQLGERGNIVQMRGEVLLAGVPRHVAEREIATLAGSFSLHEQNIHNLPRDQGPGNTVSLEVESENITERFFVVGEKRVSAEVVAAQLVKEVKRYLASPAAVGEYLADQLVLPMALAGAGEFTVAHPSCHLQTNIAVVERFLPVRFSLIETDGVTRVSIE.

Residues Q103 and 283–287 (YLADQ) each bind ATP. H308 functions as the Tele-AMP-histidine intermediate in the catalytic mechanism.

It belongs to the RNA 3'-terminal cyclase family. Type 1 subfamily.

Its subcellular location is the cytoplasm. It carries out the reaction a 3'-end 3'-phospho-ribonucleotide-RNA + ATP = a 3'-end 2',3'-cyclophospho-ribonucleotide-RNA + AMP + diphosphate. In terms of biological role, catalyzes the conversion of 3'-phosphate to a 2',3'-cyclic phosphodiester at the end of RNA. The mechanism of action of the enzyme occurs in 3 steps: (A) adenylation of the enzyme by ATP; (B) transfer of adenylate to an RNA-N3'P to produce RNA-N3'PP5'A; (C) and attack of the adjacent 2'-hydroxyl on the 3'-phosphorus in the diester linkage to produce the cyclic end product. The biological role of this enzyme is unknown but it is likely to function in some aspects of cellular RNA processing. The sequence is that of RNA 3'-terminal phosphate cyclase from Escherichia coli O6:H1 (strain CFT073 / ATCC 700928 / UPEC).